We begin with the raw amino-acid sequence, 85 residues long: Large ribosomal subunit protein bL27 (85 aa).

The disordered stretch occupies residues 1-23; the sequence is MAHKKAGGSTRNGRDSESKRLGV.

It belongs to the bacterial ribosomal protein bL27 family.

In Thioalkalivibrio sulfidiphilus (strain HL-EbGR7), this protein is Large ribosomal subunit protein bL27.